The chain runs to 140 residues: Calcitonin (140 aa).

Residues 1 to 25 (MGFWKFSPFLPLSILVLYQVGIIQA) form the signal peptide. The propeptide occupies 26–81 (APFRSALESLPDPAVLPEEESRLLLAALVKDYVQMKVRALEQEQETGGASLDSPRA). Residues Cys-84 and Cys-90 are joined by a disulfide bond. Residue Pro-115 is modified to Proline amide. The propeptide occupies 120-140 (VMARGLERDHGPHIGTSQDAY).

Belongs to the calcitonin family.

It is found in the secreted. Its function is as follows. Calcitonin is a peptide hormone that causes a rapid but short-lived drop in the level of calcium and phosphate in blood by promoting the incorporation of those ions in the bones. Calcitonin function is mediated by the calcitonin receptor/CALCR and the CALCR-RAMP2 (AMYR2) receptor complex. The sequence is that of Calcitonin (CALCA) from Equus caballus (Horse).